A 152-amino-acid polypeptide reads, in one-letter code: Xanthine-guanine phosphoribosyltransferase (152 aa).

5-phospho-alpha-D-ribose 1-diphosphate contacts are provided by residues 37–38 (RG), R69, and 88–96 (DDLVDTGGT). A GMP-binding site is contributed by R69. Residue D89 coordinates Mg(2+). Residues D92 and I135 each contribute to the guanine site. D92 and I135 together coordinate xanthine. Residues 92 to 96 (DTGGT) and 134 to 135 (WI) each bind GMP.

Belongs to the purine/pyrimidine phosphoribosyltransferase family. XGPT subfamily. In terms of assembly, homotetramer. Requires Mg(2+) as cofactor.

The protein resides in the cell inner membrane. It catalyses the reaction GMP + diphosphate = guanine + 5-phospho-alpha-D-ribose 1-diphosphate. It carries out the reaction XMP + diphosphate = xanthine + 5-phospho-alpha-D-ribose 1-diphosphate. The catalysed reaction is IMP + diphosphate = hypoxanthine + 5-phospho-alpha-D-ribose 1-diphosphate. Its pathway is purine metabolism; GMP biosynthesis via salvage pathway; GMP from guanine: step 1/1. It participates in purine metabolism; XMP biosynthesis via salvage pathway; XMP from xanthine: step 1/1. Purine salvage pathway enzyme that catalyzes the transfer of the ribosyl-5-phosphate group from 5-phospho-alpha-D-ribose 1-diphosphate (PRPP) to the N9 position of the 6-oxopurines guanine and xanthine to form the corresponding ribonucleotides GMP (guanosine 5'-monophosphate) and XMP (xanthosine 5'-monophosphate), with the release of PPi. To a lesser extent, also acts on hypoxanthine. In Serratia proteamaculans (strain 568), this protein is Xanthine-guanine phosphoribosyltransferase.